A 1064-amino-acid polypeptide reads, in one-letter code: Ribosome quality control complex subunit NEMF (1064 aa).

Residue threonine 7 is modified to Phosphothreonine. A coiled-coil region spans residues 296–359; that stretch reads VDEFYSKIEG…LIEMNLQIVD (64 aa). Serine 417 carries the phosphoserine modification. A disordered region spans residues 420–451; it reads EDGDGDASIENSDAEAPKGKKKKQKNKQLQKP. Positions 438 to 447 are enriched in basic residues; the sequence is GKKKKQKNKQ. A coiled-coil region spans residues 481–512; sequence AAKKTQRTVEAAEKAFKSAEKKTKQTLKEVQT. Positions 694-707 are enriched in acidic residues; sequence EQLEGGDSSEEETE. Disordered regions lie at residues 694 to 718 and 731 to 973; these read EQLE…DVEL and SGRD…SLTG. The span at 731–756 shows a compositional bias: basic and acidic residues; that stretch reads SGRDELSSEDGEAKAVTKDQEPIGEM. Serine 737 bears the Phosphoserine mark. Over residues 771-781 the composition is skewed to polar residues; it reads IDLSHLQSQRP. Residues 828-839 show a composition bias toward basic and acidic residues; that stretch reads IEEKDKERESAV. A coiled-coil region spans residues 858–882; sequence KRGQKSKMKKMKEKYKDQDDEDREL. Positions 859 to 870 are enriched in basic residues; that stretch reads RGQKSKMKKMKE. Residues 947 to 959 are compositionally biased toward basic and acidic residues; it reads DDPHDDKEEHDLD. Residues 960–973 show a composition bias toward polar residues; sequence QQGNEENLFDSLTG.

Belongs to the NEMF family. Component of the ribosome quality control complex (RQC), composed of the E3 ubiquitin ligase LTN1, TCF25 and NEMF associated with the 60S ribosomal subunit. The complex probably also contains VCP/p97 and its ubiquitin-binding cofactors. Interacts (via its N-terminus) with XPO1.

The protein resides in the cytoplasm. It is found in the cytosol. The protein localises to the nucleus. Its function is as follows. Key component of the ribosome quality control complex (RQC), a ribosome-associated complex that mediates the extraction of incompletely synthesized nascent chains from stalled ribosomes as well as their ubiquitin-mediated proteasomal degradation. Thereby, frees 60S subunit ribosomes from the stalled translation complex and prevents the accumulation of nascent polypeptide chains that are potentially toxic for the cell. Within the RQC complex, NEMF specifically binds stalled 60S ribosomal subunits by recognizing an exposed, nascent chain-conjugated tRNA moiety and promotes the recruitment of LTN1 to stalled 60S subunits. Following binding to stalled 60S ribosomal subunits, NEMF mediates CAT tailing by recruiting alanine-charged tRNA to the A-site and directing the elongation of stalled nascent chains independently of mRNA or 40S subunits, leading to non-templated C-terminal alanine extensions (CAT tails). Mainly recruits alanine-charged tRNAs, but can also other amino acid-charged tRNAs. CAT tailing is required to promote ubiquitination of stalled nascent chains by different E3 ubiquitin-protein ligases. In the canonical RQC pathway (RQC-L), CAT tailing facilitates LTN1-dependent ubiquitination by exposing lysine residues that would otherwise remain buried in the ribosomal exit tunnel. In the alternative RQC pathway (RQC-C) CAT tailing creates an C-degron mainly composed of alanine that is recognized by the CRL2(KLHDC10) and RCHY1/PIRH2 E3 ligases, leading to ubiquitination and degradation of stalled nascent chains. NEMF may also indirectly play a role in nuclear export. This Mus musculus (Mouse) protein is Ribosome quality control complex subunit NEMF.